The following is a 245-amino-acid chain: Rhamnogalacturonan acetylesterase (245 aa).

Residues 1–17 (MKSIALTSLSLLPSALA) form the signal peptide. Serine 26 serves as the catalytic Nucleophile. A disulfide bridge links cysteine 100 with cysteine 108. Active-site residues include aspartate 204 and histidine 207. Residues cysteine 226 and cysteine 244 are joined by a disulfide bond.

It belongs to the 'GDSL' lipolytic enzyme family.

It is found in the secreted. The catalysed reaction is Hydrolytic cleavage of 2-O-acetyl- or 3-O-acetyl groups of alpha-D-galacturonic acid in rhamnogalacturonan I.. In terms of biological role, plays a key role in the degradation of rhamnogalacturonan in the cell wall. Involved in degradation of pectin. This chain is Rhamnogalacturonan acetylesterase, found in Emericella nidulans (strain FGSC A4 / ATCC 38163 / CBS 112.46 / NRRL 194 / M139) (Aspergillus nidulans).